The chain runs to 355 residues: Tetraacyldisaccharide 4'-kinase (355 aa).

54–61 (TVGGAGKT) contacts ATP.

It belongs to the LpxK family.

It carries out the reaction a lipid A disaccharide + ATP = a lipid IVA + ADP + H(+). The protein operates within glycolipid biosynthesis; lipid IV(A) biosynthesis; lipid IV(A) from (3R)-3-hydroxytetradecanoyl-[acyl-carrier-protein] and UDP-N-acetyl-alpha-D-glucosamine: step 6/6. Its function is as follows. Transfers the gamma-phosphate of ATP to the 4'-position of a tetraacyldisaccharide 1-phosphate intermediate (termed DS-1-P) to form tetraacyldisaccharide 1,4'-bis-phosphate (lipid IVA). In Rhizobium rhizogenes (strain K84 / ATCC BAA-868) (Agrobacterium radiobacter), this protein is Tetraacyldisaccharide 4'-kinase.